An 897-amino-acid chain; its full sequence is Cytokine receptor common subunit beta (897 aa).

Positions 1–16 (MVLAQGLLSMALLALC) are cleaved as a signal peptide. Residues 17–443 (WERSLAGAEE…WDTESVLPMW (427 aa)) lie on the Extracellular side of the membrane. Cys-35 and Cys-45 are oxidised to a cystine. The N-linked (GlcNAc...) asparagine glycan is linked to Asn-58. 2 disulfides stabilise this stretch: Cys-75-Cys-96 and Cys-86-Cys-91. The region spanning 133 to 240 (PPEPRDLQIS…PEVCWDSQPG (108 aa)) is the Fibronectin type-III 1 domain. Asn-191 carries an N-linked (GlcNAc...) asparagine glycan. Intrachain disulfides connect Cys-250–Cys-260 and Cys-289–Cys-306. Residues 339–436 (QMAPPSLNVT…EWSEARSWDT (98 aa)) form the Fibronectin type-III 2 domain. Asn-346 carries N-linked (GlcNAc...) asparagine glycosylation. Positions 425 to 429 (WSEWS) match the WSXWS motif motif. The chain crosses the membrane as a helical span at residues 444–460 (VLALIVIFLTIAVLLAL). Residues 461–897 (RFCGIYGYRL…WEVNKPGEVC (437 aa)) lie on the Cytoplasmic side of the membrane. Residues 474–482 (WEEKIPNPS) carry the Box 1 motif motif. Disordered regions lie at residues 498–517 (GSMS…WGSR), 532–630 (SEVS…EYLC), 648–812 (PGQA…QPEG), and 830–849 (PGPL…PEIK). Residues 564–574 (EQPPSPQPGPP) are compositionally biased toward pro residues. The span at 723–752 (SGASSVSLVPSLGLPSDQTPSLCPGLASGP) shows a compositional bias: low complexity. Residue Tyr-766 is modified to Phosphotyrosine. Residues 830 to 840 (PGPLSLRSKPS) show a composition bias toward low complexity.

It belongs to the type I cytokine receptor family. Type 4 subfamily. In terms of assembly, heterodimer of an alpha and a beta subunit. The beta subunit is common to the IL3, IL5 and GM-CSF receptors. The signaling GM-CSF receptor complex is a dodecamer of two head-to-head hexamers of two alpha, two beta, and two ligand subunits. Interacts with TMEM102; this interaction occurs preferentially in the absence of CSF2. Interacts with FCER1G; this interaction is direct. Interacts with LYN. Interacts with JAK1. Post-translationally, may be phosphorylated by LYN.

Its subcellular location is the membrane. Functionally, cell surface receptor that plays a role in immune response and controls the production and differentiation of hematopoietic progenitor cells into lineage-restricted cells. Acts by forming an heterodimeric receptor through interaction with different partners such as IL3RA, IL5RA or CSF2RA. In turn, participates in various signaling pathways including interleukin-3, interleukin-5 and granulocyte-macrophage colony-stimulating factor/CSF2 pathways. In unstimulated conditions, interacts constitutively with JAK1 and ligand binding leads to JAK1 stimulation and subsequent activation of the JAK-STAT pathway. The protein is Cytokine receptor common subunit beta (CSF2RB) of Homo sapiens (Human).